Reading from the N-terminus, the 427-residue chain is 3-phosphoshikimate 1-carboxyvinyltransferase (427 aa).

Phosphoenolpyruvate is bound at residue lysine 20. 3-phosphoshikimate is bound by residues serine 21 and arginine 25. Positions 92 and 120 each coordinate phosphoenolpyruvate. 3-phosphoshikimate contacts are provided by serine 166, alanine 167, glutamine 168, aspartate 312, and lysine 339. Glutamine 168 is a binding site for phosphoenolpyruvate. Residue aspartate 312 is the Proton acceptor of the active site. Phosphoenolpyruvate-binding residues include arginine 343 and arginine 385.

Homotetramer.

The protein resides in the cytoplasm. The enzyme catalyses 3-phosphoshikimate + phosphoenolpyruvate = 5-O-(1-carboxyvinyl)-3-phosphoshikimate + phosphate. It functions in the pathway metabolic intermediate biosynthesis; chorismate biosynthesis; chorismate from D-erythrose 4-phosphate and phosphoenolpyruvate: step 6/7. Its activity is regulated as follows. Competitively inhibited by glyphosate. Activated by ammonium, rubidium or potassium ions. Catalyzes the transfer of the enolpyruvyl moiety of phosphoenolpyruvate (PEP) to the 5-hydroxyl of shikimate-3-phosphate (S3P) to produce enolpyruvyl shikimate-3-phosphate and inorganic phosphate. The chain is 3-phosphoshikimate 1-carboxyvinyltransferase from Streptococcus pneumoniae serotype 4 (strain ATCC BAA-334 / TIGR4).